A 621-amino-acid polypeptide reads, in one-letter code: MALLQISEPGMSPAPHQRRLAVGIDLGTTNSLVAAVRNSIPEVLGDERGRALLPSVVRYLPDRTTHIGYRAQDEAVRDPKNTIVSVKRFMGRGLKDVAHNEHSPYDFVDAPGMVQIKTVAGVKSPVEVSAEILATLRQRAEDSLGDDLVGAVITVPAYFDEAQRQATKDAARLAGLEVLRLLNEPTAAAIAYGLDNASEGIYAVYDLGGGTFDISILKLTKGVFEVLSTGGDSALGGDDFDQRLLCWIVEQAGLQPLSAQDMRLLMVRARAAKEALSEGDSTVIDAVLDSGEIVHLTLTDEIFDTITAHLVQKTLAPVRKALRDAGVTPDEVQGVVLVGGATRMPAIRKAVGDFFGQPPLTNLDPDRVVALGAAMQANLLAGNHAPGEDWLLLDVIPLSLGVETMGGLVEKIIPRNSTIPVARAQEFTTFKDGQTAMAIHVLQGERELASDCRSLARFELRGIPPMVAGAARIRVTYQVDADGLLSVTARETHSGVESSVTVKPSYGLADDDIARMLQEGFREAEHDMKSRALAEERVEADRLVEATTRALETDGDLLSADERAAVEALIASVREIATGEDHHAIKAAVETLSRGTDEFAARRMDRSIKSALAGRKVQELG.

It belongs to the heat shock protein 70 family.

In terms of biological role, chaperone involved in the maturation of iron-sulfur cluster-containing proteins. Has a low intrinsic ATPase activity which is markedly stimulated by HscB. The chain is Chaperone protein HscA homolog from Cupriavidus pinatubonensis (strain JMP 134 / LMG 1197) (Cupriavidus necator (strain JMP 134)).